A 324-amino-acid polypeptide reads, in one-letter code: MFDLDPINAAFYDQIKDLPCPHQMGGYQQAYDSLEQIQKHDAAPDIDTTTIQVGKRYGPTTVTLFRLKTLVDKPLPMVFYTHGGGWIMGSAKSFAVLMEDLARRTQAVIVFPDYTRVPHQTFPYPLEQSYEVLDYMVRHSNQHQILHGTIALAGDSVGGHMAIAMMQMSLERKLPTQIGQLVLWAPVTITYKKLGSYTTFSHAPFLTEDSMDWMIESFLPNKEDRQTALASPLTHLSDEVLAQFPPTIIFLSTVDPLLDEGVAFGHRLQKNGVDASIMKAEGQMHAFCAVKALRDGPTARAVIDLAALRLRRIFPQRDTPGHPS.

Active-site residues include serine 156, aspartate 255, and histidine 285.

The protein belongs to the AB hydrolase 3 family.

In terms of biological role, esterase; part of the Fusarium detoxification of benzoxazolinone cluster involved in the degradation of benzoxazolinones produced by the host plant. Maize, wheat, and rye produce the 2 benzoxazinone phytoanticipins 2,4-dihy-droxy-7-methoxy-1,4-benzoxazin-3-one (DIMBOA) and 2,4-dihydroxy-1,4-benzoxazin-3-one (DIBOA) that, due to their inherent instability once released, spontaneously degrade to the more stable corresponding benzoxazolinones, 6-methoxy-2-benzoxazolinone (MBOA) and 2-benzoxazolinone (BOA), respectively. The first step in the detoxification of benzoxazolinones involves the hydrolysis of the cyclic ester bond of benzoxazolinones by the gamma-lactamase FDB1 to aminophenols. FDB1 is able to convert 2-benzoxazolinone (BOA) into 2-aminophenol (2-AP), as well as 6-methoxy-2-benzoxazolinone (MBOA) into 5-methoxy-2-aminophenol (2-AMP). The N-malonyltransferase FDB2 then metabolizes aminophenols via N-malonylation to non-toxic malonamic acids. FDB2 converts 2-AP into N-(2-hydroxyphenyl) malonamic acid (HPMA) and 2-AMP into N-(2-hydroxy-4-methoxyphenyl) malonamic acid (HMPMA). The cluster also contains 2 transcription factors (FDB3 and FPSE_08121), an aldo-keto reductase (FPSE_08125) that possibly associates with a ketone component of BOA and MBOA degradation, an esterase (FPSE_08126), an acyl-CoA transferase (FPSE_08120), a solute carrier protein (FPSE_08119) and a transmembrane transporter (FPSE_08127) proposed to shuttle metabolites of benzoxazolinone degradation. The chain is Esterase FPSE_08126 from Fusarium pseudograminearum (strain CS3096) (Wheat and barley crown-rot fungus).